A 793-amino-acid polypeptide reads, in one-letter code: Signal transducer and activator of transcription 5A (793 aa).

Tyrosine 90 carries the post-translational modification Phosphotyrosine. A Phosphoserine modification is found at serine 128. The 98-residue stretch at 589-686 (WNDGAILGFV…EVFAKYYTPV (98 aa)) folds into the SH2 domain. Tyrosine 682 is subject to Phosphotyrosine. At tyrosine 694 the chain carries Phosphotyrosine; by JAK2. The disordered stretch occupies residues 772–793 (DSLDPRLSPPAGLFTSARSSLS). At serine 779 the chain carries Phosphoserine.

It belongs to the transcription factor STAT family. In terms of assembly, forms a homodimer or a heterodimer with a related family member. Binds NR3C1. Interacts with NCOA1 and SOCS7. Interacts with ERBB4. Interacts with EBF4. Post-translationally, ISGylated. Tyrosine phosphorylated in response to KITLG/SCF, IL2, IL3, IL7, IL15, CSF2/GMCSF, GH1, PRL, EPO and THPO. Activated KIT promotes phosphorylation on tyrosine residues and subsequent translocation to the nucleus. Tyrosine phosphorylated in response to constitutively activated FGFR1, FGFR2, FGFR3 and FGFR4. Tyrosine phosphorylation is required for DNA-binding activity and dimerization. Serine phosphorylation is also required for maximal transcriptional activity. Tyrosine phosphorylated in response to signaling via activated FLT3; wild-type FLT3 results in much weaker phosphorylation than constitutively activated mutant FLT3. Alternatively, can be phosphorylated by JAK2 at Tyr-694. In terms of tissue distribution, expressed in heart, lung, and weakly in muscle.

Its subcellular location is the cytoplasm. It is found in the nucleus. Carries out a dual function: signal transduction and activation of transcription. Mediates cellular responses to the cytokine KITLG/SCF and other growth factors. May mediate cellular responses to activated FGFR1, FGFR2, FGFR3 and FGFR4. Binds to the GAS element and activates PRL-induced transcription. Regulates the expression of milk proteins during lactation. This is Signal transducer and activator of transcription 5A (Stat5a) from Rattus norvegicus (Rat).